Here is a 229-residue protein sequence, read N- to C-terminus: Potassium/proton antiporter CemA (229 aa).

4 consecutive transmembrane segments (helical) span residues 7 to 27 (FTPL…SLSF), 114 to 134 (LICF…LLIL), 154 to 174 (ILLL…ELMI), and 189 to 209 (IISG…KYWI).

Belongs to the CemA family.

The protein resides in the plastid. It is found in the chloroplast inner membrane. The catalysed reaction is K(+)(in) + H(+)(out) = K(+)(out) + H(+)(in). Contributes to K(+)/H(+) antiport activity by supporting proton efflux to control proton extrusion and homeostasis in chloroplasts in a light-dependent manner to modulate photosynthesis. Prevents excessive induction of non-photochemical quenching (NPQ) under continuous-light conditions. Indirectly promotes efficient inorganic carbon uptake into chloroplasts. In Gossypium barbadense (Sea Island cotton), this protein is Potassium/proton antiporter CemA.